The following is a 329-amino-acid chain: Probable ABC transporter permease protein MG188 (329 aa).

6 helical membrane passes run 30-50, 96-116, 128-148, 176-196, 234-254, and 283-303; these read FLLF…PFFL, LISL…IVFV, VFFL…VYIF, ALWA…VLII, LIFL…LALF, and NLAG…GLVL. The ABC transmembrane type-1 domain occupies 88–303; sequence LRNSFLYSLI…VLGVCYGLVL (216 aa).

The protein belongs to the binding-protein-dependent transport system permease family. MalFG subfamily.

The protein localises to the cell membrane. Its function is as follows. Probably part of a binding-protein-dependent transport system. Probably responsible for the translocation of the substrate across the membrane. In Mycoplasma genitalium (strain ATCC 33530 / DSM 19775 / NCTC 10195 / G37) (Mycoplasmoides genitalium), this protein is Probable ABC transporter permease protein MG188.